The sequence spans 89 residues: Small ribosomal subunit protein uS15 (89 aa).

It belongs to the universal ribosomal protein uS15 family. Part of the 30S ribosomal subunit. Forms a bridge to the 50S subunit in the 70S ribosome, contacting the 23S rRNA.

Functionally, one of the primary rRNA binding proteins, it binds directly to 16S rRNA where it helps nucleate assembly of the platform of the 30S subunit by binding and bridging several RNA helices of the 16S rRNA. Its function is as follows. Forms an intersubunit bridge (bridge B4) with the 23S rRNA of the 50S subunit in the ribosome. In Geobacillus thermodenitrificans (strain NG80-2), this protein is Small ribosomal subunit protein uS15.